The following is a 288-amino-acid chain: Glucose-1-phosphate thymidylyltransferase (288 aa).

Gly8 lines the dTDP-alpha-D-glucose pocket. Residues Gly8, Gly11, Thr12, Arg13, Lys23, Gln24, Gln80, Gly85, and Asp108 each contribute to the dTTP site. DTDP-alpha-D-glucose is bound by residues Lys23, Gln24, Gln80, Gly85, Asp108, Asn109, Gly143, Glu158, Lys159, Val169, and Asp222. A Mg(2+)-binding site is contributed by Asp108. Asp222 provides a ligand contact to Mg(2+).

It belongs to the glucose-1-phosphate thymidylyltransferase family. It depends on Mg(2+) as a cofactor.

It carries out the reaction dTTP + alpha-D-glucose 1-phosphate + H(+) = dTDP-alpha-D-glucose + diphosphate. Its pathway is carbohydrate biosynthesis; dTDP-L-rhamnose biosynthesis. Catalyzes the conversion of glucose-1-phosphate and dTTP to dTDP-glucose and pyrophosphate. Involved in the biosynthesis of the dTDP-L-rhamnose which is a component of the critical linker, D-N-acetylglucosamine-L-rhamnose disaccharide, which connects the galactan region of arabinogalactan to peptidoglycan via a phosphodiester linkage. In Mycobacterium tuberculosis (strain CDC 1551 / Oshkosh), this protein is Glucose-1-phosphate thymidylyltransferase (rmlA).